The sequence spans 904 residues: Pantothenate kinase 2 (904 aa).

A disordered region spans residues 1 to 56 (MAANNNSDPILDEGGGGGVKHEAVGEAGEGKGGGGGAAATQAPAAMLPRSGSRPQL). The tract at residues 1-472 (MAANNNSDPI…LGDLNEKISW (472 aa)) is pantothenate kinase. The tract at residues 473-904 (MEKFVQKGTQ…DCICKFEPVP (432 aa)) is 4'-phosphopantetheine phosphatase. Aspartate 735, asparagine 736, and aspartate 771 together coordinate Mn(2+). Positions 855–859 (EGMGR) match the Subfamily II EGMGR motif motif.

This sequence in the N-terminal section; belongs to the type II pantothenate kinase family. The protein in the C-terminal section; belongs to the damage-control phosphatase family. Phosphopantetheine phosphatase II subfamily. Requires Mn(2+) as cofactor. Ni(2+) serves as cofactor.

It carries out the reaction (R)-pantothenate + ATP = (R)-4'-phosphopantothenate + ADP + H(+). It catalyses the reaction (R)-4'-phosphopantothenate + H2O = (R)-pantothenate + phosphate. The enzyme catalyses (R)-4'-phosphopantetheine + H2O = (R)-pantetheine + phosphate. The catalysed reaction is (R)-4'-phosphopantetheine sulfonate + H2O = (R)-pantetheine sulfonate + phosphate. It functions in the pathway cofactor biosynthesis; coenzyme A biosynthesis; CoA from (R)-pantothenate: step 1/5. Catalyzes the phosphorylation of pantothenate the first step in CoA biosynthesis. May play a role in the physiological regulation of the intracellular CoA concentration. Functionally redudant with PANK1. The phosphatase activity shows preference for normal or oxidatively damaged intermediates of 4'-phosphopantetheine, which provides strong indirect evidence that the phosphatase activity pre-empts damage in the CoA pathway. Hydrolyzing excess 4'-phosphopantetheine could constitute a directed overflow mechanism to prevent its oxidation to the S-sulfonate, sulfonate, or other forms. Hydrolyzing 4'-phosphopantetheine sulfonate or S-sulfonate would forestall their conversion to inactive forms of CoA and acyl carrier protein. The protein is Pantothenate kinase 2 of Oryza sativa subsp. japonica (Rice).